We begin with the raw amino-acid sequence, 1067 residues long: Protein bric-a-brac 2 (1067 aa).

Residues Met30–Val121 are disordered. Basic and acidic residues-rich tracts occupy residues His47–Glu62 and Lys86–Lys98. Tyr55 carries the phosphotyrosine modification. Phosphoserine occurs at positions 56, 87, and 147. The 66-residue stretch at Val223 to Gln288 folds into the BTB domain. Disordered stretches follow at residues Gly312 to Pro412, Ala444 to His505, and Gly525 to Asp563. Acidic residues predominate over residues Phe326 to Leu335. Ser377 is subject to Phosphoserine. The residue at position 384 (Thr384) is a Phosphothreonine. Residues Gly391–Pro412 show a composition bias toward low complexity. 2 stretches are compositionally biased toward gly residues: residues Gly525–Ser538 and Gly545–Ala556. Residues Phe635–Met687 enclose the HTH psq-type domain. The segment at residues Arg645–Pro690 is a DNA-binding region (H-T-H motif). The a.T hook DNA-binding region spans Asp697 to Arg708. Disordered regions lie at residues Gln796–Gln829, Ala860–Ser879, and Val891–Ala967. Over residues Ala812 to Gln829 the composition is skewed to low complexity. The span at Ala904–Arg914 shows a compositional bias: low complexity. Basic and acidic residues predominate over residues Glu915–Ser933. Residues Arg934 to Ser949 show a composition bias toward low complexity.

In terms of tissue distribution, leg imaginal disk at the central region of the tarsus and in eye antenna disk at the basal cylinder.

Its subcellular location is the nucleus. Probably acts as a transcriptional regulator. Required for the specification of the tarsal segment. Also involved in antenna development. The chain is Protein bric-a-brac 2 (bab2) from Drosophila melanogaster (Fruit fly).